The chain runs to 238 residues: Ribonuclease PH (238 aa).

Phosphate is bound by residues Arg86 and 124-126; that span reads GTR.

Belongs to the RNase PH family. As to quaternary structure, homohexameric ring arranged as a trimer of dimers.

It catalyses the reaction tRNA(n+1) + phosphate = tRNA(n) + a ribonucleoside 5'-diphosphate. Functionally, phosphorolytic 3'-5' exoribonuclease that plays an important role in tRNA 3'-end maturation. Removes nucleotide residues following the 3'-CCA terminus of tRNAs; can also add nucleotides to the ends of RNA molecules by using nucleoside diphosphates as substrates, but this may not be physiologically important. Probably plays a role in initiation of 16S rRNA degradation (leading to ribosome degradation) during starvation. This Psychrobacter cryohalolentis (strain ATCC BAA-1226 / DSM 17306 / VKM B-2378 / K5) protein is Ribonuclease PH.